A 67-amino-acid chain; its full sequence is MGNIKQGFIKRTARELFDRYPNEFTRDFEHNKKKVEELTNITSKTMRNRIAGYVTRLVRLKEEGKIL.

Belongs to the eukaryotic ribosomal protein eS17 family.

This Thermococcus sibiricus (strain DSM 12597 / MM 739) protein is Small ribosomal subunit protein eS17.